The chain runs to 442 residues: ATP-dependent protease ATPase subunit HslU (442 aa).

ATP is bound by residues Ile18 and 60 to 65; that span reads GVGKTE. Residues 136–156 are disordered; that stretch reads LPKPKNDWDSTDSDANSNTRQ. Residues Asp255, Glu320, and Arg392 each coordinate ATP.

This sequence belongs to the ClpX chaperone family. HslU subfamily. A double ring-shaped homohexamer of HslV is capped on each side by a ring-shaped HslU homohexamer. The assembly of the HslU/HslV complex is dependent on binding of ATP.

It is found in the cytoplasm. ATPase subunit of a proteasome-like degradation complex; this subunit has chaperone activity. The binding of ATP and its subsequent hydrolysis by HslU are essential for unfolding of protein substrates subsequently hydrolyzed by HslV. HslU recognizes the N-terminal part of its protein substrates and unfolds these before they are guided to HslV for hydrolysis. The polypeptide is ATP-dependent protease ATPase subunit HslU (Shewanella sp. (strain MR-7)).